A 173-amino-acid chain; its full sequence is Bifunctional protein PyrR (173 aa).

The short motif at 93–105 (IILVDDVLYTGRT) is the PRPP-binding element.

It belongs to the purine/pyrimidine phosphoribosyltransferase family. PyrR subfamily. As to quaternary structure, homodimer and homohexamer; in equilibrium.

The catalysed reaction is UMP + diphosphate = 5-phospho-alpha-D-ribose 1-diphosphate + uracil. Functionally, regulates transcriptional attenuation of the pyrimidine nucleotide (pyr) operon by binding in a uridine-dependent manner to specific sites on pyr mRNA. This disrupts an antiterminator hairpin in the RNA and favors formation of a downstream transcription terminator, leading to a reduced expression of downstream genes. Its function is as follows. Also displays a weak uracil phosphoribosyltransferase activity which is not physiologically significant. This chain is Bifunctional protein PyrR, found in Streptococcus equi subsp. zooepidemicus (strain H70).